A 507-amino-acid chain; its full sequence is FSD1-like protein (507 aa).

Residues 70-109 (KQEQVRKSQELQSQLSQCNNALENSEELLEFATRSLDIKE) adopt a coiled-coil conformation. In terms of domain architecture, COS spans 105 to 162 (LDIKEPEEFSKAARQIKDRVTMASAFRLSLKPKVSDNMTHLMVDFSQERQMLQTLKFL). A Fibronectin type-III domain is found at 164 to 268 (VPKAPEIDPV…DPVTLETRAL (105 aa)). Positions 291 to 484 (DPTGGKGQES…LSTGMQVPSA (194 aa)) constitute a B30.2/SPRY domain. The segment at 292–345 (PTGGKGQESKIKGKENKGSVHVTSLKKHTSGTPSPKRTSVGSRPPAVRGSRDRF) is disordered. Positions 298–309 (QESKIKGKENKG) are enriched in basic and acidic residues. Positions 321–332 (SGTPSPKRTSVG) are enriched in polar residues. A phosphoserine mark is found at S498 and S501.

This is FSD1-like protein (Fsd1l) from Mus musculus (Mouse).